The sequence spans 400 residues: Telomere repeat-binding protein 6 (400 aa).

The 80-residue stretch at 173–252 (VKFGIKSLNI…DDENLGSLGF (80 aa)) folds into the Ubiquitin-like domain. Residues 310 to 369 (VQRRIRRPFTVSEVEALVQAVERLGTGRWRDVKSHAFNHVNHRTYVDLKDKWKTLVHTAK) form the HTH myb-type domain. Positions 338–365 (WRDVKSHAFNHVNHRTYVDLKDKWKTLV) form a DNA-binding region, H-T-H motif.

As to quaternary structure, homodimer. As to expression, expressed ubiquitously.

Its subcellular location is the nucleus. Its function is as follows. Binds specifically to the plant telomeric double-stranded DNA sequences. At least 4 repeats of telomeric sequences are required for binding. In Arabidopsis thaliana (Mouse-ear cress), this protein is Telomere repeat-binding protein 6 (TRP6).